The sequence spans 415 residues: Zona pellucida-like domain-containing protein 1 (415 aa).

The signal sequence occupies residues 1–19 (MERVWLLFLLAIRVSPGSA). The Extracellular segment spans residues 20-373 (QFNSYNCDAN…PFQLNAVTSS (354 aa)). The region spanning 43 to 320 (YCGVQAITMK…PICGNRKRRD (278 aa)) is the ZP domain. 2 disulfides stabilise this stretch: Cys44–Cys155 and Cys79–Cys104. Asn164 carries N-linked (GlcNAc...) asparagine glycosylation. Intrachain disulfides connect Cys235–Cys296 and Cys255–Cys313. Residues 374 to 394 (LISGMVILGVLCFSLLLCSLA) traverse the membrane as a helical segment. The Cytoplasmic segment spans residues 395-415 (LLHRKGSTSLVLNGVRNPVFE).

Proteolytically cleaved before the transmembrane segment to yield the secreted form found in the extracellular matrix of the cupula.

The protein localises to the cytoplasmic vesicle membrane. The protein resides in the secreted. It is found in the extracellular space. Its subcellular location is the extracellular matrix. Glycoprotein which is a component of the gelatinous extracellular matrix in the cupulae of the vestibular organ. In Mus musculus (Mouse), this protein is Zona pellucida-like domain-containing protein 1 (Zpld1).